A 163-amino-acid polypeptide reads, in one-letter code: Adenosine 5'-monophosphoramidase HINT2 (163 aa).

A mitochondrion-targeting transit peptide spans 1-17; sequence MAAAVVLAAGLRAARRA. The 109-residue stretch at 55–163 folds into the HIT domain; the sequence is IFSRILDKSL…GGRQLQWPPG (109 aa). Positions 63 and 80 each coordinate AMP. Residue K119 is modified to N6-acetyllysine. Residue N136 coordinates AMP. K139 carries the post-translational modification N6-acetyllysine. AMP contacts are provided by residues 142 to 145 and 149 to 151; these read AQSV and HIH. The Histidine triad motif signature appears at 147–151; it reads HLHIH. The active-site Tele-AMP-histidine intermediate is H149.

The protein belongs to the HINT family. High expression in liver and pancreas. Expression is significantly down-regulated in hepatocellular carcinoma (HCC) patients.

It is found in the mitochondrion. The catalysed reaction is adenosine 5'-phosphoramidate + H2O = AMP + NH4(+). Functionally, exhibits adenosine 5'-monophosphoramidase activity, hydrolyzing purine nucleotide phosphoramidates with a single phosphate group such as adenosine 5'monophosphoramidate (AMP-NH2) to yield AMP and NH2. Hydrolyzes adenosine 5'-O-p-nitrophenylphosphoramidate (AMP-pNA). Hydrolyzes fluorogenic purine nucleoside tryptamine phosphoramidates in vitro. May be involved in steroid biosynthesis. May play a role in apoptosis. This chain is Adenosine 5'-monophosphoramidase HINT2, found in Homo sapiens (Human).